The primary structure comprises 98 residues: NADH-ubiquinone oxidoreductase chain 4L (98 aa).

3 consecutive transmembrane segments (helical) span residues 1-21 (MTLIHMNILMAFSMSLMGLLM), 29-49 (ALLCLEGMMLSLFVLAALTIL), and 61-81 (IILLVFAACEAAIGLALLVMV).

The protein belongs to the complex I subunit 4L family. Core subunit of respiratory chain NADH dehydrogenase (Complex I) which is composed of 45 different subunits.

The protein localises to the mitochondrion inner membrane. It catalyses the reaction a ubiquinone + NADH + 5 H(+)(in) = a ubiquinol + NAD(+) + 4 H(+)(out). Its function is as follows. Core subunit of the mitochondrial membrane respiratory chain NADH dehydrogenase (Complex I) which catalyzes electron transfer from NADH through the respiratory chain, using ubiquinone as an electron acceptor. Part of the enzyme membrane arm which is embedded in the lipid bilayer and involved in proton translocation. This chain is NADH-ubiquinone oxidoreductase chain 4L (MT-ND4L), found in Balaenoptera physalus (Fin whale).